We begin with the raw amino-acid sequence, 37 residues long: Photosystem II reaction center protein L (37 aa).

Residues 1-13 (MEPNPNRQPVELN) lie on the Cytoplasmic side of the membrane. A helical membrane pass occupies residues 14–35 (RTSLYLGLLLILVLALLFSSYF). Topologically, residues 36 to 37 (FN) are lumenal.

PSII is composed of 1 copy each of membrane proteins PsbA, PsbB, PsbC, PsbD, PsbE, PsbF, PsbH, PsbI, PsbJ, PsbK, PsbL, PsbM, PsbT, PsbX, PsbY, PsbZ, Psb30/Ycf12, peripheral proteins PsbO, CyanoQ (PsbQ), PsbU, PsbV and a large number of cofactors. It forms dimeric complexes. Part of a photosystem II (PSII) assembly intermediate complex PSII-I; crystallized from a strain deleted of psbJ, it forms monomeric PSII before addition of the oxygen evolving complex. PSII-I includes 3 assembly factors not found in mature PSII (Psb27, Psb28 and Psb34). It depends on PSII binds multiple chlorophylls, carotenoids and specific lipids. as a cofactor.

Its subcellular location is the cellular thylakoid membrane. One of the components of the core complex of photosystem II (PSII). PSII is a light-driven water:plastoquinone oxidoreductase that uses light energy to abstract electrons from H(2)O, generating O(2) and a proton gradient subsequently used for ATP formation. It consists of a core antenna complex that captures photons, and an electron transfer chain that converts photonic excitation into a charge separation. This subunit is found at the monomer-monomer interface and is required for correct PSII assembly and/or dimerization. This subunit may make specific contacts with lipid(s). This Thermosynechococcus vestitus (strain NIES-2133 / IAM M-273 / BP-1) protein is Photosystem II reaction center protein L.